The primary structure comprises 115 residues: DPPPAIGREVDCSSYKGKGSQIACPRHLQPICGTDHNTYSNECMFCALTLNKEFEVRKLQDTACDIECTEYSDMCTMDYRPLCGSDGKNYSNKCIFCNAVVRSRGTIFLAKHGEC.

Kazal-like domains follow at residues 6 to 66 and 67 to 115; these read IGRE…ACDI and ECTE…HGEC. Intrachain disulfides connect cysteine 12–cysteine 46, cysteine 24–cysteine 43, cysteine 32–cysteine 64, cysteine 68–cysteine 97, cysteine 75–cysteine 94, and cysteine 83–cysteine 115.

It is found in the secreted. In terms of biological role, this inhibitor is composed of two homologous actively inhibiting halves: one which inhibits trypsin, the other which inhibits elastase. The polypeptide is Double-headed protease inhibitor, submandibular gland (Vulpes vulpes (Red fox)).